The sequence spans 313 residues: Coproporphyrin III ferrochelatase (313 aa).

Fe(2+) is bound by residues H191 and E270.

The protein belongs to the ferrochelatase family.

It is found in the cytoplasm. It carries out the reaction Fe-coproporphyrin III + 2 H(+) = coproporphyrin III + Fe(2+). Its pathway is porphyrin-containing compound metabolism; protoheme biosynthesis. In terms of biological role, involved in coproporphyrin-dependent heme b biosynthesis. Catalyzes the insertion of ferrous iron into coproporphyrin III to form Fe-coproporphyrin III. The protein is Coproporphyrin III ferrochelatase of Enterococcus faecalis (strain ATCC 700802 / V583).